Reading from the N-terminus, the 740-residue chain is Phosphoribosylformylglycinamidine synthase subunit PurL (740 aa).

The active site involves H53. ATP-binding residues include Y56 and K95. E97 serves as a coordination point for Mg(2+). Substrate is bound by residues 98-101 and R120; that span reads SHNH. Residue H99 is the Proton acceptor of the active site. D121 contacts Mg(2+). Q244 provides a ligand contact to substrate. Mg(2+) is bound at residue D274. 318–320 serves as a coordination point for substrate; it reads ESQ. Residues D501 and G538 each coordinate ATP. N539 lines the Mg(2+) pocket. S541 lines the substrate pocket.

It belongs to the FGAMS family. As to quaternary structure, monomer. Part of the FGAM synthase complex composed of 1 PurL, 1 PurQ and 2 PurS subunits.

Its subcellular location is the cytoplasm. It carries out the reaction N(2)-formyl-N(1)-(5-phospho-beta-D-ribosyl)glycinamide + L-glutamine + ATP + H2O = 2-formamido-N(1)-(5-O-phospho-beta-D-ribosyl)acetamidine + L-glutamate + ADP + phosphate + H(+). It functions in the pathway purine metabolism; IMP biosynthesis via de novo pathway; 5-amino-1-(5-phospho-D-ribosyl)imidazole from N(2)-formyl-N(1)-(5-phospho-D-ribosyl)glycinamide: step 1/2. Its function is as follows. Part of the phosphoribosylformylglycinamidine synthase complex involved in the purines biosynthetic pathway. Catalyzes the ATP-dependent conversion of formylglycinamide ribonucleotide (FGAR) and glutamine to yield formylglycinamidine ribonucleotide (FGAM) and glutamate. The FGAM synthase complex is composed of three subunits. PurQ produces an ammonia molecule by converting glutamine to glutamate. PurL transfers the ammonia molecule to FGAR to form FGAM in an ATP-dependent manner. PurS interacts with PurQ and PurL and is thought to assist in the transfer of the ammonia molecule from PurQ to PurL. The chain is Phosphoribosylformylglycinamidine synthase subunit PurL from Lactobacillus delbrueckii subsp. bulgaricus (strain ATCC 11842 / DSM 20081 / BCRC 10696 / JCM 1002 / NBRC 13953 / NCIMB 11778 / NCTC 12712 / WDCM 00102 / Lb 14).